The primary structure comprises 541 residues: Metal transporter Nramp1 (541 aa).

A glycan (N-linked (GlcNAc...) asparagine) is linked at Asn17. Helical transmembrane passes span 45–65 (LFAY…PGNF), 78–98 (ELLW…SLAA), 122–142 (FILW…EVIG), 153–173 (IPVW…LALQ), 182–202 (LFIA…LGYA), 222–242 (GAAG…NLFL), 271–291 (GFAL…SGAV), 315–335 (FLLE…ALLA), 371–391 (SLAI…GAGK), and 392–412 (LIII…VPLL). Asn426 is a glycosylation site (N-linked (GlcNAc...) asparagine). 2 helical membrane-spanning segments follow: residues 430–450 (ISSI…YYLA) and 465–485 (VAAI…LAGV). N-linked (GlcNAc...) asparagine glycosylation is present at Asn511.

The protein belongs to the NRAMP (TC 2.A.55) family.

Its subcellular location is the membrane. Probable divalent metal transporter. This is Metal transporter Nramp1 from Populus trichocarpa (Western balsam poplar).